The sequence spans 443 residues: ATP-dependent protease ATPase subunit HslU (443 aa).

ATP-binding positions include isoleucine 18, glycine 60 to glutamate 65, aspartate 256, glutamate 321, and arginine 393.

The protein belongs to the ClpX chaperone family. HslU subfamily. In terms of assembly, a double ring-shaped homohexamer of HslV is capped on each side by a ring-shaped HslU homohexamer. The assembly of the HslU/HslV complex is dependent on binding of ATP.

The protein localises to the cytoplasm. In terms of biological role, ATPase subunit of a proteasome-like degradation complex; this subunit has chaperone activity. The binding of ATP and its subsequent hydrolysis by HslU are essential for unfolding of protein substrates subsequently hydrolyzed by HslV. HslU recognizes the N-terminal part of its protein substrates and unfolds these before they are guided to HslV for hydrolysis. This chain is ATP-dependent protease ATPase subunit HslU, found in Buchnera aphidicola subsp. Acyrthosiphon pisum (strain 5A).